Consider the following 346-residue polypeptide: NADH-quinone oxidoreductase subunit H (346 aa).

The next 9 helical transmembrane spans lie at 13-33 (ILLILLQCLLLVVPLLVALAF), 51-71 (PNVVGAFGLLQSFADFLKYIV), 83-103 (AVYFLAPIVSLVMALIAWAVI), 116-136 (VAVLYVFAVSSLEVYGVIMGG), 162-182 (IGLIIIGVIISTGSMNFTAIV), 191-211 (LLNWYFLPHFPMLFLFFISAL), 244-264 (FMIGELVAVVLMCALTVLLFF), 278-298 (VFWMILKMLAVFFMFSMVKAI), and 310-330 (LGWKVFLPFSLFWVVFVAFMA).

This sequence belongs to the complex I subunit 1 family. As to quaternary structure, NDH-1 is composed of 14 different subunits. Subunits NuoA, H, J, K, L, M, N constitute the membrane sector of the complex.

Its subcellular location is the cell inner membrane. The catalysed reaction is a quinone + NADH + 5 H(+)(in) = a quinol + NAD(+) + 4 H(+)(out). Functionally, NDH-1 shuttles electrons from NADH, via FMN and iron-sulfur (Fe-S) centers, to quinones in the respiratory chain. The immediate electron acceptor for the enzyme in this species is believed to be ubiquinone. Couples the redox reaction to proton translocation (for every two electrons transferred, four hydrogen ions are translocated across the cytoplasmic membrane), and thus conserves the redox energy in a proton gradient. This subunit may bind ubiquinone. The sequence is that of NADH-quinone oxidoreductase subunit H from Jannaschia sp. (strain CCS1).